The primary structure comprises 270 residues: 3-phenylpropionate-dihydrodiol/cinnamic acid-dihydrodiol dehydrogenase (270 aa).

Phe-10–Ala-34 serves as a coordination point for NAD(+). Residue Ser-143 participates in substrate binding. The active-site Proton acceptor is Tyr-156.

It belongs to the short-chain dehydrogenases/reductases (SDR) family.

The enzyme catalyses 3-(cis-5,6-dihydroxycyclohexa-1,3-dien-1-yl)propanoate + NAD(+) = 3-(2,3-dihydroxyphenyl)propanoate + NADH + H(+). It carries out the reaction (2E)-3-(cis-5,6-dihydroxycyclohexa-1,3-dien-1-yl)prop-2-enoate + NAD(+) = (2E)-3-(2,3-dihydroxyphenyl)prop-2-enoate + NADH + H(+). The protein operates within aromatic compound metabolism; 3-phenylpropanoate degradation. In terms of biological role, converts 3-phenylpropionate-dihydrodiol (PP-dihydrodiol) and cinnamic acid-dihydrodiol (CI-dihydrodiol) into 3-(2,3-dihydroxylphenyl)propanoic acid (DHPP) and 2,3-dihydroxicinnamic acid (DHCI), respectively. The polypeptide is 3-phenylpropionate-dihydrodiol/cinnamic acid-dihydrodiol dehydrogenase (Escherichia coli O7:K1 (strain IAI39 / ExPEC)).